Reading from the N-terminus, the 140-residue chain is Ribonuclease P protein subunit p20 (140 aa).

This sequence belongs to the histone-like Alba family. In terms of assembly, component of nuclear RNase P and RNase MRP complexes. RNase P consists of a catalytic RNA moiety and 10 different protein chains; POP1, POP4, POP5, POP7, RPP14, RPP21, RPP25, RPP30, RPP38 and RPP40. Within the RNase P complex, POP1, POP7 and RPP25 form the 'finger' subcomplex, POP5, RPP14, RPP40 and homodimeric RPP30 form the 'palm' subcomplex, and RPP21, POP4 and RPP38 form the 'wrist' subcomplex. All subunits of the RNase P complex interact with the catalytic RNA. Several subunits of RNase P are also part of the RNase MRP complex. RNase MRP consists of a catalytic RNA moiety and about 8 protein subunits; POP1, POP7, RPP25, RPP30, RPP38, RPP40 and possibly also POP4 and POP5. Interacts with SMN1. POP7 forms a heterodimer with RPP25 that binds to the P3 stem loop of the catalytic RNA.

The protein resides in the nucleus. It localises to the nucleolus. Its subcellular location is the cytoplasm. The protein localises to the cytoplasmic granule. Its function is as follows. Component of ribonuclease P, a ribonucleoprotein complex that generates mature tRNA molecules by cleaving their 5'-ends. Also a component of the MRP ribonuclease complex, which cleaves pre-rRNA sequences. The sequence is that of Ribonuclease P protein subunit p20 (POP7) from Homo sapiens (Human).